Here is a 335-residue protein sequence, read N- to C-terminus: uncharacterized protein (335 aa).

The region spanning 21-258 (VMTSDLRKVY…QNTYHVQGQN (238 aa)) is the ABC transporter domain. Residue 60 to 67 (GPNGAGKT) coordinates ATP.

Belongs to the ABC transporter superfamily.

This is an uncharacterized protein from Nostoc sp. (strain PCC 7120 / SAG 25.82 / UTEX 2576).